The chain runs to 183 residues: Gamma-crystallin N-B (183 aa).

4 consecutive Beta/gamma crystallin 'Greek key' domains span residues 6–46 (GKIC…RVES), 47–89 (GAWI…RPIR), 95–136 (YRME…RVFG), and 138–180 (GAWV…RRIV).

This sequence belongs to the beta/gamma-crystallin family. Monomer.

Crystallins are the dominant structural components of the vertebrate eye lens. The chain is Gamma-crystallin N-B (crygnb) from Danio rerio (Zebrafish).